The chain runs to 455 residues: tRNA modification GTPase MnmE (455 aa).

Residues Arg24, Glu81, and Lys120 each contribute to the (6S)-5-formyl-5,6,7,8-tetrahydrofolate site. In terms of domain architecture, TrmE-type G spans 216–378 (GMTVVIAGRP…LREHLKHCMG (163 aa)). Asn226 contributes to the K(+) binding site. GTP-binding positions include 226-231 (NAGKSS), 245-251 (TDIAGTT), 270-273 (DTAG), and 335-338 (NKAD). Ser230 lines the Mg(2+) pocket. Residues Thr245, Ile247, and Thr250 each contribute to the K(+) site. A Mg(2+)-binding site is contributed by Thr251. Position 455 (Lys455) interacts with (6S)-5-formyl-5,6,7,8-tetrahydrofolate.

It belongs to the TRAFAC class TrmE-Era-EngA-EngB-Septin-like GTPase superfamily. TrmE GTPase family. In terms of assembly, homodimer. Heterotetramer of two MnmE and two MnmG subunits. K(+) serves as cofactor.

It is found in the cytoplasm. Functionally, exhibits a very high intrinsic GTPase hydrolysis rate. Involved in the addition of a carboxymethylaminomethyl (cmnm) group at the wobble position (U34) of certain tRNAs, forming tRNA-cmnm(5)s(2)U34. The polypeptide is tRNA modification GTPase MnmE (Stutzerimonas stutzeri (strain A1501) (Pseudomonas stutzeri)).